A 412-amino-acid polypeptide reads, in one-letter code: POU domain, class 4, transcription factor 2 (412 aa).

Residues 29–96 (LHSASPGSSA…SEAMRRACLP (68 aa)) are disordered. Residues 31 to 53 (SASPGSSAPAAPSASSPSSSSNA) are compositionally biased toward low complexity. 2 stretches are compositionally biased toward gly residues: residues 54-70 (GSGG…GGGR) and 78-87 (GSGGGGGGGS). The segment at 94-240 (CLPTPPSNIF…MHQAALSMAH (147 aa)) is required for transcriptional activation. The POU-IV box signature appears at 113 to 122 (RAEALAAVDI). Residues 123-191 (VSQSKSHHHH…HHHHQPHQAL (69 aa)) are disordered. Residues 127 to 138 (KSHHHHPPHHSP) are compositionally biased toward basic residues. Over residues 152–169 (PCTSAASSSSVPISHPSA) the composition is skewed to low complexity. The segment covering 173–187 (THHHHHHHHHHHHQP) has biased composition (basic residues). Positions 174–188 (HHHHHHHHHHHHQPH) match the Nuclear speckle targeting signal motif. A required for DNA-binding and transcriptional repression region spans residues 241 to 412 (AHGLPSHMGC…QKRMKYSAGI (172 aa)). One can recognise a POU-specific domain in the interval 253–330 (DVDADPRDLE…ILQAWLEEAE (78 aa)). Positions 348–407 (KKRKRTSIAAPEKRSLEAYFAIQPRPSSEKIAAIAEKLDLKKNVVRVWFCNQRQKQKRMK) form a DNA-binding region, homeobox.

Belongs to the POU transcription factor family. Class-4 subfamily. Interacts with POU4F1; this interaction inhibits both POU4F1 DNA-binding and transcriptional activities. Interacts (C-terminus) with ESR1 (via DNA-binding domain); this interaction increases the estrogen receptor ESR1 transcriptional activity in a DNA- and ligand 17-beta-estradiol-independent manner. Interacts (via C-terminus) with TP53 (via N-terminus). Interacts with DLX1 (via homeobox DNA-binding domain); this interaction suppresses DLX1-mediated transcriptional activity in postnatal retina enhancing retinal ganglion cell (RGC) differentiation. Interacts with DLX2 (via homeobox DNA-binding domain); this interaction enhances RGC differentiation. Interacts (via C-terminus) with ISL1 (via C-terminus). Interacts with ISL2. Interacts with LHX2. Expressed in the heart, brain and spinal cord. Expressed in cardiomyocytes (at protein level). Expressed in brain and spinal cord. Expressed in dorsal root ganglion (RGD) neurons.

The protein resides in the nucleus. It is found in the nucleus speckle. It localises to the cytoplasm. Tissue-specific DNA-binding transcription factor involved in the development and differentiation of target cells. Functions either as activator or repressor modulating the rate of target gene transcription through RNA polymerase II enzyme in a promoter-dependent manner. Binds to the consensus octamer motif 5'-AT[A/T]A[T/A]T[A/T]A-3' of promoter of target genes. Plays a fundamental role in the gene regulatory network essential for retinal ganglion cell (RGC) differentiation. Binds to an octamer site to form a ternary complex with ISL1; cooperates positively with ISL1 and ISL2 to potentiate transcriptional activation of RGC target genes being involved in RGC fate commitment in the developing retina and RGC axon formation and pathfinding. Inhibits DLX1 and DLX2 transcriptional activities preventing DLX1- and DLX2-mediated ability to promote amacrine cell fate specification. In cooperation with TP53 potentiates transcriptional activation of BAX promoter activity increasing neuronal cell apoptosis. Negatively regulates BAX promoter activity in the absence of TP53. Acts as a transcriptional coactivator via its interaction with the transcription factor ESR1 by enhancing its effect on estrogen response element (ERE)-containing promoter. Antagonizes the transcriptional stimulatory activity of POU4F1 by preventing its binding to an octamer motif. Involved in TNFSF11-mediated terminal osteoclast differentiation. This Rattus norvegicus (Rat) protein is POU domain, class 4, transcription factor 2.